Consider the following 551-residue polypeptide: DNA double-strand break repair helicase HerA (551 aa).

ATP is bound by residues Arg152, 161–166 (GAGKSN), and 507–508 (RI).

This sequence belongs to the HerA family. As to quaternary structure, homohexamer. Interacts with NurA.

It catalyses the reaction Couples ATP hydrolysis with the unwinding of duplex DNA at the replication fork by translocating in the 5'-3' direction. This creates two antiparallel DNA single strands (ssDNA). The leading ssDNA polymer is the template for DNA polymerase III holoenzyme which synthesizes a continuous strand.. It carries out the reaction ATP + H2O = ADP + phosphate + H(+). The enzyme catalyses Couples ATP hydrolysis with the unwinding of duplex DNA by translocating in the 3'-5' direction.. Its activity is regulated as follows. Helicase activity is stimulated in the presence of NurA. Involved in DNA double-strand break (DSB) repair. Probably acts with NurA to stimulate resection of the 5' strand and produce the long 3' single-strand that is required for RadA loading. Has DNA-dependent ATPase activity and DNA helicase activity. The protein is DNA double-strand break repair helicase HerA of Pyrococcus furiosus (strain ATCC 43587 / DSM 3638 / JCM 8422 / Vc1).